Here is a 62-residue protein sequence, read N- to C-terminus: Large ribosomal subunit protein uL29 (62 aa).

This sequence belongs to the universal ribosomal protein uL29 family.

This is Large ribosomal subunit protein uL29 from Ruthia magnifica subsp. Calyptogena magnifica.